The primary structure comprises 355 residues: MLDRLQAVENRYEKLNELLSDPAIISDSNKLREYSKEQSDIQETVEVYREYKDVREQLKDAKAMLEDKLDAEMREMVKEEVSELESQEKTLSERLKILLVPKDPNDDKNVIVEVRGAAGGDEAALFAGDLYRMYSRYAEVQGWKTEIIEASYTELGGYKEIIFMINGKGAFAKLKFENGAHRVQRVPETESGGRIHTSTATVAVLPEAEEVEIDIHEKDVRVDTFASSGPGGQSVNTTMSAVRLTHLPTGVVVSCQDEKSQIKNKEKAMKVLRARVYDKFRQEAQAEYDQNRKQAVGTGDRSERIRTYNFPQNRVTDHRIGLTIQKLDQILQGKLDDFINALVMEDQAQRMEAAE.

Glutamine 233 is subject to N5-methylglutamine.

This sequence belongs to the prokaryotic/mitochondrial release factor family. Post-translationally, methylated by PrmC. Methylation increases the termination efficiency of RF1.

It is found in the cytoplasm. In terms of biological role, peptide chain release factor 1 directs the termination of translation in response to the peptide chain termination codons UAG and UAA. The protein is Peptide chain release factor 1 of Bacillus anthracis.